The primary structure comprises 146 residues: Protein MucA (146 aa).

Residues Ser-62 and Lys-99 each act as for autocatalytic cleavage activity in the active site.

This sequence belongs to the peptidase S24 family.

In terms of biological role, involved in UV protection and mutation. The sequence is that of Protein MucA (mucA) from Escherichia coli.